A 504-amino-acid polypeptide reads, in one-letter code: ATP synthase subunit alpha 2 (504 aa).

169–176 is an ATP binding site; it reads GDRQTGKT.

Belongs to the ATPase alpha/beta chains family. In terms of assembly, F-type ATPases have 2 components, CF(1) - the catalytic core - and CF(0) - the membrane proton channel. CF(1) has five subunits: alpha(3), beta(3), gamma(1), delta(1), epsilon(1). CF(0) has three main subunits: a(1), b(2) and c(9-12). The alpha and beta chains form an alternating ring which encloses part of the gamma chain. CF(1) is attached to CF(0) by a central stalk formed by the gamma and epsilon chains, while a peripheral stalk is formed by the delta and b chains.

Its subcellular location is the cell membrane. The catalysed reaction is ATP + H2O + 4 H(+)(in) = ADP + phosphate + 5 H(+)(out). Produces ATP from ADP in the presence of a proton gradient across the membrane. The alpha chain is a regulatory subunit. In Listeria innocua serovar 6a (strain ATCC BAA-680 / CLIP 11262), this protein is ATP synthase subunit alpha 2.